The following is a 249-amino-acid chain: Triosephosphate isomerase (249 aa).

2 residues coordinate substrate: N10 and K12. H94 (electrophile) is an active-site residue. E166 serves as the catalytic Proton acceptor.

It belongs to the triosephosphate isomerase family. Homodimer. In terms of processing, the N-terminus is blocked.

The catalysed reaction is D-glyceraldehyde 3-phosphate = dihydroxyacetone phosphate. The protein operates within carbohydrate biosynthesis; gluconeogenesis. Its pathway is carbohydrate degradation; glycolysis; D-glyceraldehyde 3-phosphate from glycerone phosphate: step 1/1. The sequence is that of Triosephosphate isomerase (TPI1) from Paracoccidioides lutzii (strain ATCC MYA-826 / Pb01) (Paracoccidioides brasiliensis).